We begin with the raw amino-acid sequence, 538 residues long: Phosphoenolpyruvate carboxykinase (ATP) (538 aa).

Residues R61, Y195, and K201 each coordinate substrate. Residues K201, H220, and 236 to 244 (GLSGTGKTT) each bind ATP. Residues K201 and H220 each contribute to the Mn(2+) site. D257 serves as a coordination point for Mn(2+). The ATP site is built by E285, R323, and T449. R323 serves as a coordination point for substrate.

It belongs to the phosphoenolpyruvate carboxykinase (ATP) family. Mn(2+) is required as a cofactor.

The protein localises to the cytoplasm. The catalysed reaction is oxaloacetate + ATP = phosphoenolpyruvate + ADP + CO2. The protein operates within carbohydrate biosynthesis; gluconeogenesis. Functionally, involved in the gluconeogenesis. Catalyzes the conversion of oxaloacetate (OAA) to phosphoenolpyruvate (PEP) through direct phosphoryl transfer between the nucleoside triphosphate and OAA. This chain is Phosphoenolpyruvate carboxykinase (ATP), found in Afipia carboxidovorans (strain ATCC 49405 / DSM 1227 / KCTC 32145 / OM5) (Oligotropha carboxidovorans).